We begin with the raw amino-acid sequence, 339 residues long: DNA-directed RNA polymerase subunit alpha (339 aa).

Positions 1–233 (MVREEVAGST…DLFLPFLHAE (233 aa)) are alpha N-terminal domain (alpha-NTD). The tract at residues 264–339 (KKGIPLNCIF…IDLLKNKLSF (76 aa)) is alpha C-terminal domain (alpha-CTD).

It belongs to the RNA polymerase alpha chain family. As to quaternary structure, in plastids the minimal PEP RNA polymerase catalytic core is composed of four subunits: alpha, beta, beta', and beta''. When a (nuclear-encoded) sigma factor is associated with the core the holoenzyme is formed, which can initiate transcription.

The protein localises to the plastid. It localises to the chloroplast. It catalyses the reaction RNA(n) + a ribonucleoside 5'-triphosphate = RNA(n+1) + diphosphate. In terms of biological role, DNA-dependent RNA polymerase catalyzes the transcription of DNA into RNA using the four ribonucleoside triphosphates as substrates. This is DNA-directed RNA polymerase subunit alpha from Festucopsis festucoides.